Consider the following 171-residue polypeptide: UPF0098 protein aq_1250 (171 aa).

The protein belongs to the UPF0098 family.

The polypeptide is UPF0098 protein aq_1250 (Aquifex aeolicus (strain VF5)).